A 598-amino-acid chain; its full sequence is Probable translation initiation factor IF-2 (598 aa).

Positions 3 to 225 (LRCPIVSVLG…GLAQKFLEQK (223 aa)) constitute a tr-type G domain. Residues 12-19 (GHVDHGKT) are G1. Position 12–19 (12–19 (GHVDHGKT)) interacts with GTP. The interval 37-41 (GITQH) is G2. The segment at 76–79 (DTPG) is G3. Residues 76–80 (DTPGH) and 130–133 (NKVD) contribute to the GTP site. Residues 130 to 133 (NKVD) are G4. The G5 stretch occupies residues 200-202 (SAM).

Belongs to the TRAFAC class translation factor GTPase superfamily. Classic translation factor GTPase family. IF-2 subfamily.

Function in general translation initiation by promoting the binding of the formylmethionine-tRNA to ribosomes. Seems to function along with eIF-2. The protein is Probable translation initiation factor IF-2 of Methanococcus maripaludis (strain C7 / ATCC BAA-1331).